A 474-amino-acid polypeptide reads, in one-letter code: Glutamate--tRNA ligase 1 (474 aa).

The short motif at 10-20 (PSPTGFLHIGG) is the 'HIGH' region element. The short motif at 239 to 243 (KLSKR) is the 'KMSKS' region element. Lys-242 lines the ATP pocket.

The protein belongs to the class-I aminoacyl-tRNA synthetase family. Glutamate--tRNA ligase type 1 subfamily. As to quaternary structure, monomer.

It is found in the cytoplasm. The catalysed reaction is tRNA(Glu) + L-glutamate + ATP = L-glutamyl-tRNA(Glu) + AMP + diphosphate. In terms of biological role, catalyzes the attachment of glutamate to tRNA(Glu) in a two-step reaction: glutamate is first activated by ATP to form Glu-AMP and then transferred to the acceptor end of tRNA(Glu). The protein is Glutamate--tRNA ligase 1 of Methylobacterium sp. (strain 4-46).